Reading from the N-terminus, the 208-residue chain is Outer-membrane lipoprotein carrier protein (208 aa).

The N-terminal stretch at 1 to 22 (MRKTLSILAISLPLLVSGYAQA) is a signal peptide.

This sequence belongs to the LolA family. In terms of assembly, monomer.

The protein resides in the periplasm. Functionally, participates in the translocation of lipoproteins from the inner membrane to the outer membrane. Only forms a complex with a lipoprotein if the residue after the N-terminal Cys is not an aspartate (The Asp acts as a targeting signal to indicate that the lipoprotein should stay in the inner membrane). The protein is Outer-membrane lipoprotein carrier protein of Shewanella sediminis (strain HAW-EB3).